Here is a 345-residue protein sequence, read N- to C-terminus: Protein arginine N-methyltransferase 1 (345 aa).

Residues 24–345 form the SAM-dependent MTase PRMT-type domain; the sequence is ADYYFDSYSH…VKNTQQYRMR (322 aa). Residues His-37, Arg-46, Gly-70, Glu-92, and Glu-121 each coordinate S-adenosyl-L-methionine. Residues Glu-136 and Glu-145 contribute to the active site.

It belongs to the class I-like SAM-binding methyltransferase superfamily. Protein arginine N-methyltransferase family. Post-translationally, phosphorylated during flagellum resorption.

Its subcellular location is the nucleus. The protein resides in the cell projection. The protein localises to the cilium. It is found in the flagellum. The enzyme catalyses L-arginyl-[protein] + S-adenosyl-L-methionine = N(omega)-methyl-L-arginyl-[protein] + S-adenosyl-L-homocysteine + H(+). It catalyses the reaction L-arginyl-[protein] + 2 S-adenosyl-L-methionine = N(omega),N(omega)-dimethyl-L-arginyl-[protein] + 2 S-adenosyl-L-homocysteine + 2 H(+). In terms of biological role, arginine methyltransferase that methylates (mono and asymmetric dimethylation) the guanidino nitrogens of arginyl residues present in target proteins. Mediates asymmetric dimethylation of components of the axoneme during flagellum resorption, such as CCDC40/FAP172, CCDC65/FAP250, RSP1, RSP2, RPS5, RSP6, and tektin. This Chlamydomonas reinhardtii (Chlamydomonas smithii) protein is Protein arginine N-methyltransferase 1 (PRMT1).